Reading from the N-terminus, the 540-residue chain is MRVNNGLTPQELEAYGISDVHDIVYNPSYDLLYQEELDPSLTGYERGVLTNLGAVAVDTGIFTGRSPKDKYIVRDDTTRDTFWWADKGKGKNDNKPLSPETWQHLKGLVTRQLSGKRLFVVDAFCGANPDTRLSVRFITEVAWQAHFVKNMFIRPSDEELAGFKPDFIVMNGAKCTNPQWKEQGLNSENFVAFNLTERMQLIGGTWYGGEMKKGMFSMMNYLLPLKGIASMHCSANVGEKGDVAVFFGLSGTGKTTLSTDPKRRLIGDDEHGWDDDGVFNFEGGCYAKTIKLSKEAEPEIYNAIRRDALLENVTVREDGTIDFDDGSKTENTRVSYPIYHIDNIVKPVSKAGHATKVIFLTADAFGVLPPVSRLTADQTQYHFLSGFTAKLAGTERGITEPTPTFSACFGAAFLSLHPTQYAEVLVKRMQAAGAQAYLVNTGWNGTGKRISIKDTRAIIDAILNGSLDNAETFTLPMFNLAIPTELPGVDTKILDPRNTYASPEQWQEKAETLAKLFIDNFDKYTDTPAGTALVAAGPKL.

Substrate is bound at residue arginine 65. An N6-acetyllysine modification is found at lysine 87. 2 residues coordinate substrate: tyrosine 207 and lysine 213. Residues lysine 213, histidine 232, and 248–256 (GLSGTGKTT) contribute to the ATP site. 2 residues coordinate Mn(2+): lysine 213 and histidine 232. Aspartate 269 serves as a coordination point for Mn(2+). ATP is bound by residues glutamate 297, arginine 333, 449-450 (RI), and threonine 455. Residue arginine 333 coordinates substrate. N6-acetyllysine is present on lysine 523.

This sequence belongs to the phosphoenolpyruvate carboxykinase (ATP) family. In terms of assembly, monomer. Mn(2+) serves as cofactor.

The protein resides in the cytoplasm. It catalyses the reaction oxaloacetate + ATP = phosphoenolpyruvate + ADP + CO2. The protein operates within carbohydrate biosynthesis; gluconeogenesis. Involved in the gluconeogenesis. Catalyzes the conversion of oxaloacetate (OAA) to phosphoenolpyruvate (PEP) through direct phosphoryl transfer between the nucleoside triphosphate and OAA. This is Phosphoenolpyruvate carboxykinase (ATP) from Shigella flexneri serotype 5b (strain 8401).